The primary structure comprises 95 residues: MKKTSLKLMTLVLGFCFVIYLLQGPRGGSRNGDLLIARKLISLEPIETKNAARSLKDSISTDLEEEVDRLMEHEYPSPVKPRKRTPVHNGVRNRH.

The first 24 residues, 1-24 (MKKTSLKLMTLVLGFCFVIYLLQG), serve as a signal peptide directing secretion. Residues 25 to 73 (PRGGSRNGDLLIARKLISLEPIETKNAARSLKDSISTDLEEEVDRLMEH) constitute a propeptide that is removed on maturation. Residues 72-95 (EHEYPSPVKPRKRTPVHNGVRNRH) form a disordered region. The residue at position 75 (Tyr-75) is a Sulfotyrosine. Basic residues predominate over residues 80–95 (KPRKRTPVHNGVRNRH). Position 86 is a hydroxyproline (Pro-86). The propeptide occupies 90 to 95 (GVRNRH).

It belongs to the RGF family. As to quaternary structure, binds to LRR receptor-like serine/threonine-protein kinases to trigger their dimerization with SERK proteins and subsequent signaling. In terms of tissue distribution, expressed in roots.

The protein localises to the secreted. Functionally, signaling peptide (root growth factor) required during root gravitropism in a PIN2-traffic dependent manner. Regulates the pattern of root growth and lateral root development by modulating the length and the number of cortical cells in the root apical meristem (RAM), and the anticlinal asymmetric cell divisions in lateral root initiation cells. The polypeptide is Protein GOLVEN 9 (Arabidopsis thaliana (Mouse-ear cress)).